Reading from the N-terminus, the 162-residue chain is uncharacterized protein (162 aa).

Belongs to the A.longa ORF167/ORF288 family.

It is found in the plastid. This is an uncharacterized protein from Euglena longa (Euglenophycean alga).